We begin with the raw amino-acid sequence, 161 residues long: Short form salivary protein D7S (161 aa).

The N-terminal stretch at 1–18 is a signal peptide; it reads MKFPSILLAILLFKPITA. 3 cysteine pairs are disulfide-bonded: C33/C67, C47/C155, and C109/C125.

Belongs to the PBP/GOBP family.

The protein resides in the secreted. Its function is as follows. In contrast to the related D7 salivary proteins, does not bind serotonin. The sequence is that of Short form salivary protein D7S from Culex quinquefasciatus (Southern house mosquito).